Here is a 1169-residue protein sequence, read N- to C-terminus: Phospholipid-transporting ATPase IF (1169 aa).

Residues 1-47 (LGFDPPHQSDTRTIYIANRFPQNGLYTPQKFIDNRIISSKYTVWNFV) are Cytoplasmic-facing. A helical membrane pass occupies residues 48 to 69 (PKNLFEQFRRVANFYFLIIFLV). Topologically, residues 70 to 74 (QLMID) are extracellular. Residues 75 to 96 (TPTSPITSGLPLFFVITVTAIK) traverse the membrane as a helical segment. Over 97–281 (QGYEDWLRHN…SAVEKSMNTF (185 aa)) the chain is Cytoplasmic. Residues 282–303 (LIIYLIILISEAIISTILKYTW) form a helical membrane-spanning segment. Residues 304-333 (QAEEKWDEPWYNQKTEHQRNSSKILRFISD) are Extracellular-facing. Residues 334–351 (FLAFLVLYNFIIPISLYV) traverse the membrane as a helical segment. Residues 352–868 (TVEMQKFLGS…HGHFYYIRIA (517 aa)) are Cytoplasmic-facing. D399 functions as the 4-aspartylphosphate intermediate in the catalytic mechanism. ATP is bound by residues D399, K400, T401, E523, F564, K587, R618, T698, G699, D700, R786, and K792. D399 is a Mg(2+) binding site. Position 401 (T401) interacts with Mg(2+). The required for binding to the RING-finger of HLTF stretch occupies residues 794–802 (KVIRLIKIS). D813 is a binding site for Mg(2+). ATP is bound by residues N816 and D817. D817 is a Mg(2+) binding site. The helical transmembrane segment at 869 to 890 (TLVQYFFYKNVCFITPQFLYQF) threads the bilayer. Over 891 to 902 (YCLFSQQTLYDS) the chain is Extracellular. Residues 903 to 922 (VYLTLYNICFTSLPILIYSL) form a helical membrane-spanning segment. Residues 923–952 (LEQHIDPHILQNKPTLYRDISKNRLLSIKT) are Cytoplasmic-facing. The chain crosses the membrane as a helical span at residues 953–974 (FLYWTILGFSRSFIFLFGSYFL). Residues 975-989 (IGKDASLLGNGQMFG) are Extracellular-facing. Residues 990–1012 (NWTFGTLVFTVMVITVTVKMALE) traverse the membrane as a helical segment. Topologically, residues 1013 to 1017 (THFWT) are cytoplasmic. The helical transmembrane segment at 1018–1039 (WINHLVTWGSIIFYFVFSLFYG) threads the bilayer. Topologically, residues 1040–1057 (GILWPFLGSQNMYFVFIQ) are extracellular. The chain crosses the membrane as a helical span at residues 1058–1082 (LVSSGSAWFAIILMVVTCLFLDVMK). Residues 1083–1169 (KVFDRQLHPT…TLSTMDSSTC (87 aa)) are Cytoplasmic-facing. Position 1146 is a phosphoserine (S1146).

The protein belongs to the cation transport ATPase (P-type) (TC 3.A.3) family. Type IV subfamily. In terms of assembly, component of a P4-ATPase flippase complex which consists of a catalytic alpha subunit ATP11B and an accessory beta subunit TMEM30A. As to quaternary structure, interacts with HLTF (via the RING-finger). Requires Mg(2+) as cofactor. In terms of tissue distribution, ubiquitously expressed.

It localises to the recycling endosome membrane. The protein resides in the early endosome. Its subcellular location is the endoplasmic reticulum. It is found in the golgi apparatus. The protein localises to the trans-Golgi network. It localises to the nucleus inner membrane. The enzyme catalyses ATP + H2O + phospholipidSide 1 = ADP + phosphate + phospholipidSide 2.. It catalyses the reaction a 1,2-diacyl-sn-glycero-3-phospho-L-serine(out) + ATP + H2O = a 1,2-diacyl-sn-glycero-3-phospho-L-serine(in) + ADP + phosphate + H(+). The catalysed reaction is a 1,2-diacyl-sn-glycero-3-phosphoethanolamine(out) + ATP + H2O = a 1,2-diacyl-sn-glycero-3-phosphoethanolamine(in) + ADP + phosphate + H(+). In terms of biological role, catalytic component of a P4-ATPase flippase complex which catalyzes the hydrolysis of ATP coupled to the transport of aminophospholipids, phosphatidylserines (PS) and phosphatidylethanolamines (PE), from the outer to the inner leaflet of intracellular membranes. May contribute to the maintenance of membrane lipid asymmetry in endosome compartment. Functionally, appears to play a role in the subnuclear trafficking of transcription factors with RING motifs. The sequence is that of Phospholipid-transporting ATPase IF (ATP11B) from Oryctolagus cuniculus (Rabbit).